Consider the following 648-residue polypeptide: A-type voltage-gated potassium channel KCND1 (648 aa).

At 1 to 183 (MAAGVATWLP…RAFENPHTST (183 aa)) the chain is on the cytoplasmic side. The interval 2-20 (AAGVATWLPFARAAAVGWL) is interaction with KCNIP1, KCNIP2, and other family members. The interaction with KCNIP2 stretch occupies residues 2–20 (AAGVATWLPFARAAAVGWL). Zn(2+) is bound by residues His104, Cys131, and Cys132. Residues 144–164 (AERLAEDEEAEQAGDGPTLPA) are disordered. Residues 184–205 (AALVFYYVTGFFIAVSVIANVV) form a helical membrane-spanning segment. At 206-230 (ETIPCRSPTRRPPREQPCGDRFPLA) the chain is on the extracellular side. The chain crosses the membrane as a helical span at residues 231–252 (FFCMDTACVLIFTGEYLLRLFA). At 253 to 263 (APSRCRFLRSV) the chain is on the cytoplasmic side. Residues 264-284 (MSLIDVVAILPYYIGLFMPKN) traverse the membrane as a helical segment. Residues 285–287 (EDV) are Extracellular-facing. Residues 288–308 (SGAFVTLRVFRVFRIFKFSRH) traverse the membrane as a helical; Voltage-sensor segment. Topologically, residues 309–323 (SQGLRILGYTLKSCA) are cytoplasmic. The S4-S5 linker stretch occupies residues 310–323 (QGLRILGYTLKSCA). A helical membrane pass occupies residues 324–345 (SELGFLLFSLTMAIIIFATVMF). Residues 346–359 (YAEKGTNKTNFTSI) lie on the Extracellular side of the membrane. N-linked (GlcNAc...) asparagine glycans are attached at residues Asn352 and Asn355. Residues 360–371 (PAAFWYTIVTMT) constitute an intramembrane region (helical). The Selectivity filter motif lies at 372–377 (TLGYGD). Residues 372–379 (TLGYGDMV) lie within the membrane without spanning it. Over 380-386 (PSTIAGK) the chain is Extracellular. A helical membrane pass occupies residues 387-415 (IFGSICSLSGVLVIALPVPVIVSNFSRIY). The Cytoplasmic portion of the chain corresponds to 416 to 648 (HQNQRADKRR…LPETVKISSL (233 aa)). At Ser458 the chain carries Phosphoserine. The segment at 474–489 (FEQQHHHLLHCLEKTT) is mediates dendritic targeting. Positions 474–489 (FEQQHHHLLHCLEKTT) are required for dendritic targeting. Ser555 is subject to Phosphoserine. The interval 601 to 636 (IPTPPANTPDESQPSSPGGGGGGASSTLRNSSLGTP) is disordered.

This sequence belongs to the potassium channel family. D (Shal) (TC 1.A.1.2) subfamily. Kv4.1/KCND1 sub-subfamily. In terms of assembly, component of heteromultimeric potassium channels. Identified in potassium channel complexes containing KCND1, KCND2, KCND3, KCNIP1, KCNIP2, KCNIP3, KCNIP4, DPP6 and DPP10.

It localises to the cell membrane. It carries out the reaction K(+)(in) = K(+)(out). In terms of biological role, A-type voltage-gated potassium channel that mediates transmembrane potassium transport in excitable membranes in the brain. Mediates A-type current I(SA) in suprachiasmatic nucleus (SCN) neurons. Exhibits a low-threshold A-type current with a hyperpolarized steady-state inactivation midpoint and the recovery process was steeply voltage-dependent, with recovery being markedly faster at more negative potentials. May regulates repetitive firing rates in the suprachiasmatic nucleus (SCN) neurons and circadian rhythms in neuronal excitability and behavior. Contributes to the regulation of the circadian rhythm of action potential firing in suprachiasmatic nucleus neurons, which regulates the circadian rhythm of locomotor activity. The regulatory subunit KCNIP1 modulates the kinetics of channel inactivation, increases the current amplitudes and accelerates recovery from inactivation, shifts activation in a depolarizing direction. The regulatory subunit DPP10 decreases the voltage sensitivity of the inactivation channel gating. This is A-type voltage-gated potassium channel KCND1 from Bos taurus (Bovine).